A 347-amino-acid chain; its full sequence is Protein RecA (347 aa).

67-74 serves as a coordination point for ATP; sequence GPESSGKT.

This sequence belongs to the RecA family.

Its subcellular location is the cytoplasm. Its function is as follows. Can catalyze the hydrolysis of ATP in the presence of single-stranded DNA, the ATP-dependent uptake of single-stranded DNA by duplex DNA, and the ATP-dependent hybridization of homologous single-stranded DNAs. It interacts with LexA causing its activation and leading to its autocatalytic cleavage. In Sulfurovum sp. (strain NBC37-1), this protein is Protein RecA.